A 120-amino-acid chain; its full sequence is U13-lycotoxin-Ls1e (120 aa).

Positions methionine 1–cysteine 16 are cleaved as a signal peptide. The propeptide occupies phenylalanine 17–arginine 54. Intrachain disulfides connect cysteine 56-cysteine 70, cysteine 63-cysteine 76, cysteine 69-cysteine 87, and cysteine 78-cysteine 85. Residues cysteine 56–cysteine 95 enclose the Agouti domain.

Belongs to the neurotoxin 05 (agouti) family. Contains 6 disulfide bonds. Expressed by the venom gland.

The protein resides in the secreted. This is U13-lycotoxin-Ls1e from Lycosa singoriensis (Wolf spider).